A 1361-amino-acid chain; its full sequence is DNA-directed RNA polymerase subunit beta' (1361 aa).

Positions 69, 71, 84, and 87 each coordinate Zn(2+). Residues aspartate 460, aspartate 462, and aspartate 464 each coordinate Mg(2+). 4 residues coordinate Zn(2+): cysteine 808, cysteine 882, cysteine 889, and cysteine 892.

The protein belongs to the RNA polymerase beta' chain family. The RNAP catalytic core consists of 2 alpha, 1 beta, 1 beta' and 1 omega subunit. When a sigma factor is associated with the core the holoenzyme is formed, which can initiate transcription. The cofactor is Mg(2+). Zn(2+) serves as cofactor.

It carries out the reaction RNA(n) + a ribonucleoside 5'-triphosphate = RNA(n+1) + diphosphate. In terms of biological role, DNA-dependent RNA polymerase catalyzes the transcription of DNA into RNA using the four ribonucleoside triphosphates as substrates. The protein is DNA-directed RNA polymerase subunit beta' of Rickettsia bellii (strain RML369-C).